Consider the following 306-residue polypeptide: tRNA pseudouridine synthase B (306 aa).

The active-site Nucleophile is the aspartate 46.

This sequence belongs to the pseudouridine synthase TruB family. Type 1 subfamily.

The enzyme catalyses uridine(55) in tRNA = pseudouridine(55) in tRNA. Its function is as follows. Responsible for synthesis of pseudouridine from uracil-55 in the psi GC loop of transfer RNAs. The protein is tRNA pseudouridine synthase B of Gluconacetobacter diazotrophicus (strain ATCC 49037 / DSM 5601 / CCUG 37298 / CIP 103539 / LMG 7603 / PAl5).